An 864-amino-acid chain; its full sequence is Leucine--tRNA ligase (864 aa).

Positions 42–52 match the 'HIGH' region motif; it reads PYPSGRLHMGH. The 'KMSKS' region motif lies at 621–625; the sequence is KMSKS. K624 is an ATP binding site.

The protein belongs to the class-I aminoacyl-tRNA synthetase family.

The protein localises to the cytoplasm. The enzyme catalyses tRNA(Leu) + L-leucine + ATP = L-leucyl-tRNA(Leu) + AMP + diphosphate. The chain is Leucine--tRNA ligase from Alkalilimnicola ehrlichii (strain ATCC BAA-1101 / DSM 17681 / MLHE-1).